We begin with the raw amino-acid sequence, 478 residues long: MKFSTILPILWANCCLCMIIPDFDGIVRFIENIDGTRSVRAGEGLGQHDPGNFHTEHQHVAHKTEFLPYRYVIVFNEDISLQQIQSHMQVVQKDHSTSVGKLTENDAFWRVISSSVSSKSQFGGIDNFFDINGLFRGYTGYFTDEIIKIISQDPIIKFVEQETTVKISNSSLQEEAPWGLHRVSHREKPKYGQDLEYLYEDAAGKGVTSYVLDTGIDTEHEDFEGRAEWGAVIPANDEASDLNGHGTHCAGIIGSKHFGVAKNTKIVAVKVLRSNGEGTVSDVIKGIEYVTKEHIESSKKKNKEFKGSTANLSLGSSKSLAMEMAVNAAVDSGVHFAIAAGNEDEDACLSSPAGAEKSITVGASTFSDDRAFFSNWGTCVDVFAPGINIMSTYIGSRNATLSLSGTSMASPHVAGILSYFLSLQPAPDSEFFNDAPSPQELKEKVLKFSTQGVLGDIGDDTPNKLIYNGGGKKLDGFW.

The first 17 residues, 1–17 (MKFSTILPILWANCCLC), serve as a signal peptide directing secretion. The region spanning 70–167 (RYVIVFNEDI…FVEQETTVKI (98 aa)) is the Inhibitor I9 domain. The Peptidase S8 domain maps to 177–478 (PWGLHRVSHR…GGGKKLDGFW (302 aa)). Residues Asp213, His245, and Ser407 each act as charge relay system in the active site.

Belongs to the peptidase S8 family.

Functionally, serine protease with unknown substrate. The protein is Subtilisin-like protease 3 (YSP3) of Saccharomyces cerevisiae (strain ATCC 204508 / S288c) (Baker's yeast).